Reading from the N-terminus, the 538-residue chain is Pentatricopeptide repeat-containing protein At1g33350 (538 aa).

10 PPR repeats span residues Asn-87–Arg-123, Asn-125–Leu-159, Tyr-160–Arg-191, Asn-192–Ser-226, Trp-227–Glu-253, Asn-259–Ser-293, Asp-294–Lys-324, Ser-325–Asp-359, Asp-363–Pro-398, and Arg-399–Ala-433. The type E motif stretch occupies residues Ile-434 to Asp-509.

This sequence belongs to the PPR family. PCMP-E subfamily.

The sequence is that of Pentatricopeptide repeat-containing protein At1g33350 (PCMP-E57) from Arabidopsis thaliana (Mouse-ear cress).